The chain runs to 222 residues: MRTAVIQFPGSNCDADALHAARLTLDPDAGFVWHTETALPRGTELVFLPGGFSYGDHLRSGAIAARSPIMAAVKAHAERGGFVLGVCNGFQVLTEAGLLPGALSRNRDLHFRCAPVHLRVENAQTVFTRAYQPGQILEIPIAHGEGNYYADPETIARLEAEGRVVFRYVDNPNGSLNDIAGIVNERGNVLGMMPHPERAVEALLGSEDGRGIFESLKGALVQ.

In terms of domain architecture, Glutamine amidotransferase type-1 spans 2 to 222 (RTAVIQFPGS…FESLKGALVQ (221 aa)). The active-site Nucleophile is Cys87. Residues His195 and Glu197 contribute to the active site.

As to quaternary structure, part of the FGAM synthase complex composed of 1 PurL, 1 PurQ and 2 PurS subunits.

It is found in the cytoplasm. The catalysed reaction is N(2)-formyl-N(1)-(5-phospho-beta-D-ribosyl)glycinamide + L-glutamine + ATP + H2O = 2-formamido-N(1)-(5-O-phospho-beta-D-ribosyl)acetamidine + L-glutamate + ADP + phosphate + H(+). It carries out the reaction L-glutamine + H2O = L-glutamate + NH4(+). The protein operates within purine metabolism; IMP biosynthesis via de novo pathway; 5-amino-1-(5-phospho-D-ribosyl)imidazole from N(2)-formyl-N(1)-(5-phospho-D-ribosyl)glycinamide: step 1/2. Functionally, part of the phosphoribosylformylglycinamidine synthase complex involved in the purines biosynthetic pathway. Catalyzes the ATP-dependent conversion of formylglycinamide ribonucleotide (FGAR) and glutamine to yield formylglycinamidine ribonucleotide (FGAM) and glutamate. The FGAM synthase complex is composed of three subunits. PurQ produces an ammonia molecule by converting glutamine to glutamate. PurL transfers the ammonia molecule to FGAR to form FGAM in an ATP-dependent manner. PurS interacts with PurQ and PurL and is thought to assist in the transfer of the ammonia molecule from PurQ to PurL. The protein is Phosphoribosylformylglycinamidine synthase subunit PurQ of Deinococcus geothermalis (strain DSM 11300 / CIP 105573 / AG-3a).